We begin with the raw amino-acid sequence, 144 residues long: MALERTLSIIKPDAMEKNTAGAIVARLEQEGFTVKAMKRIHLTRAEAEGFYAEHRGRGFFDELVTFMSRSPILVMALEREDAVAKYREVIGATDPAKAAAGTIRKLYGANVGENAVHGSDKPATAAREIAYFFAGYEVAPSATA.

6 residues coordinate ATP: lysine 11, phenylalanine 59, arginine 87, threonine 93, arginine 104, and asparagine 114. Histidine 117 (pros-phosphohistidine intermediate) is an active-site residue.

Belongs to the NDK family. As to quaternary structure, homotetramer. It depends on Mg(2+) as a cofactor.

The protein resides in the cytoplasm. It carries out the reaction a 2'-deoxyribonucleoside 5'-diphosphate + ATP = a 2'-deoxyribonucleoside 5'-triphosphate + ADP. The catalysed reaction is a ribonucleoside 5'-diphosphate + ATP = a ribonucleoside 5'-triphosphate + ADP. In terms of biological role, major role in the synthesis of nucleoside triphosphates other than ATP. The ATP gamma phosphate is transferred to the NDP beta phosphate via a ping-pong mechanism, using a phosphorylated active-site intermediate. The protein is Nucleoside diphosphate kinase of Sorangium cellulosum (strain So ce56) (Polyangium cellulosum (strain So ce56)).